The chain runs to 453 residues: Tubulin alpha chain (453 aa).

Glutamine 11 is a GTP binding site. The residue at position 40 (lysine 40) is an N6-acetyllysine. GTP contacts are provided by glutamate 71, glycine 144, threonine 145, threonine 179, asparagine 206, and asparagine 228. Residue glutamate 71 coordinates Mg(2+). Residue glutamate 254 is part of the active site.

This sequence belongs to the tubulin family. Dimer of alpha and beta chains. A typical microtubule is a hollow water-filled tube with an outer diameter of 25 nm and an inner diameter of 15 nM. Alpha-beta heterodimers associate head-to-tail to form protofilaments running lengthwise along the microtubule wall with the beta-tubulin subunit facing the microtubule plus end conferring a structural polarity. Microtubules usually have 13 protofilaments but different protofilament numbers can be found in some organisms and specialized cells. Requires Mg(2+) as cofactor. In terms of processing, undergoes a tyrosination/detyrosination cycle, the cyclic removal and re-addition of a C-terminal tyrosine residue by the enzymes tubulin tyrosine carboxypeptidase (TTCP) and tubulin tyrosine ligase (TTL), respectively. Post-translationally, acetylation of alpha chains at Lys-40 stabilizes microtubules and affects affinity and processivity of microtubule motors. This modification has a role in multiple cellular functions, ranging from cell motility, cell cycle progression or cell differentiation to intracellular trafficking and signaling.

The protein resides in the cytoplasm. The protein localises to the cytoskeleton. It catalyses the reaction GTP + H2O = GDP + phosphate + H(+). Tubulin is the major constituent of microtubules, a cylinder consisting of laterally associated linear protofilaments composed of alpha- and beta-tubulin heterodimers. Microtubules grow by the addition of GTP-tubulin dimers to the microtubule end, where a stabilizing cap forms. Below the cap, tubulin dimers are in GDP-bound state, owing to GTPase activity of alpha-tubulin. The protein is Tubulin alpha chain (TUBA) of Neospora caninum (Coccidian parasite).